We begin with the raw amino-acid sequence, 235 residues long: Protein GrpE (235 aa).

The segment covering M1–V18 has biased composition (polar residues). Disordered regions lie at residues M1 to H50 and E198 to S235. Residues T19–P35 are compositionally biased toward basic and acidic residues. Residues A215–S235 are compositionally biased toward polar residues.

Belongs to the GrpE family. As to quaternary structure, homodimer.

It is found in the cytoplasm. In terms of biological role, participates actively in the response to hyperosmotic and heat shock by preventing the aggregation of stress-denatured proteins, in association with DnaK and GrpE. It is the nucleotide exchange factor for DnaK and may function as a thermosensor. Unfolded proteins bind initially to DnaJ; upon interaction with the DnaJ-bound protein, DnaK hydrolyzes its bound ATP, resulting in the formation of a stable complex. GrpE releases ADP from DnaK; ATP binding to DnaK triggers the release of the substrate protein, thus completing the reaction cycle. Several rounds of ATP-dependent interactions between DnaJ, DnaK and GrpE are required for fully efficient folding. The polypeptide is Protein GrpE (Mycobacterium tuberculosis (strain ATCC 25177 / H37Ra)).